The chain runs to 101 residues: NADH-quinone oxidoreductase subunit K (101 aa).

3 helical membrane passes run 2 to 22 (TLSAYLALALILFCIGLYGAL), 28 to 48 (VIVLICIELMLNAVNINFVAF), and 62 to 82 (FALFAIAVAAAEAAVGLAALI).

This sequence belongs to the complex I subunit 4L family. In terms of assembly, NDH-1 is composed of 14 different subunits. Subunits NuoA, H, J, K, L, M, N constitute the membrane sector of the complex.

It localises to the cell membrane. The enzyme catalyses a quinone + NADH + 5 H(+)(in) = a quinol + NAD(+) + 4 H(+)(out). NDH-1 shuttles electrons from NADH, via FMN and iron-sulfur (Fe-S) centers, to quinones in the respiratory chain. The immediate electron acceptor for the enzyme in this species is believed to be a menaquinone. Couples the redox reaction to proton translocation (for every two electrons transferred, four hydrogen ions are translocated across the cytoplasmic membrane), and thus conserves the redox energy in a proton gradient. In Geobacillus kaustophilus (strain HTA426), this protein is NADH-quinone oxidoreductase subunit K.